The sequence spans 447 residues: Trigger factor (447 aa).

Residues 159–244 (GDMLLMQVES…VREIKEEKLP (86 aa)) enclose the PPIase FKBP-type domain.

This sequence belongs to the FKBP-type PPIase family. Tig subfamily.

It is found in the cytoplasm. It catalyses the reaction [protein]-peptidylproline (omega=180) = [protein]-peptidylproline (omega=0). Functionally, involved in protein export. Acts as a chaperone by maintaining the newly synthesized protein in an open conformation. Functions as a peptidyl-prolyl cis-trans isomerase. The protein is Trigger factor of Dehalococcoides mccartyi (strain ATCC BAA-2100 / JCM 16839 / KCTC 5957 / BAV1).